Here is a 478-residue protein sequence, read N- to C-terminus: 3-isopropylmalate dehydratase large subunit (478 aa).

Positions 347, 407, and 410 each coordinate [4Fe-4S] cluster.

Belongs to the aconitase/IPM isomerase family. LeuC type 1 subfamily. As to quaternary structure, heterodimer of LeuC and LeuD. The cofactor is [4Fe-4S] cluster.

The catalysed reaction is (2R,3S)-3-isopropylmalate = (2S)-2-isopropylmalate. The protein operates within amino-acid biosynthesis; L-leucine biosynthesis; L-leucine from 3-methyl-2-oxobutanoate: step 2/4. Its function is as follows. Catalyzes the isomerization between 2-isopropylmalate and 3-isopropylmalate, via the formation of 2-isopropylmaleate. The chain is 3-isopropylmalate dehydratase large subunit from Prochlorococcus marinus (strain MIT 9303).